We begin with the raw amino-acid sequence, 316 residues long: DNA-directed RNA polymerase subunit alpha (316 aa).

Positions 1-232 (MSGNDLFPST…DLFNPLHHCS (232 aa)) are alpha N-terminal domain (alpha-NTD). Positions 247–316 (KINDILVEEL…LNIYLPKEKY (70 aa)) are alpha C-terminal domain (alpha-CTD).

This sequence belongs to the RNA polymerase alpha chain family. In plastids the minimal PEP RNA polymerase catalytic core is composed of four subunits: alpha, beta, beta', and beta''. When a (nuclear-encoded) sigma factor is associated with the core the holoenzyme is formed, which can initiate transcription.

Its subcellular location is the plastid. The protein localises to the chloroplast. It catalyses the reaction RNA(n) + a ribonucleoside 5'-triphosphate = RNA(n+1) + diphosphate. Functionally, DNA-dependent RNA polymerase catalyzes the transcription of DNA into RNA using the four ribonucleoside triphosphates as substrates. The protein is DNA-directed RNA polymerase subunit alpha of Mesostigma viride (Green alga).